The chain runs to 1186 residues: Major DNA-binding protein (1186 aa).

A zinc finger spans residues 495-508 (CCLCSLDNRHSCAH). The Required for filament formation signature appears at 839–840 (FW). The required for nuclear localization stretch occupies residues 1160–1186 (RRRPLACSDLFGDAPAEKRNDLTLDML).

It belongs to the herpesviridae major DNA-binding protein family. Homooligomers. Forms double-helical filaments necessary for the formation of replication compartments within the host nucleus. Interacts with the origin-binding protein. Interacts with the helicase primase complex; this interaction stimulates primer synthesis activity of the helicase-primase complex. Interacts with the DNA polymerase. Interacts with the alkaline exonuclease; this interaction increases its nuclease processivity.

It localises to the host nucleus. In terms of biological role, plays several crucial roles in viral infection. Participates in the opening of the viral DNA origin to initiate replication by interacting with the origin-binding protein. May disrupt loops, hairpins and other secondary structures present on ssDNA to reduce and eliminate pausing of viral DNA polymerase at specific sites during elongation. Promotes viral DNA recombination by performing strand-transfer, characterized by the ability to transfer a DNA strand from a linear duplex to a complementary single-stranded DNA circle. Can also catalyze the renaturation of complementary single strands. Additionally, reorganizes the host cell nucleus, leading to the formation of prereplicative sites and replication compartments. This process is driven by the protein which can form double-helical filaments in the absence of DNA. This Bovine herpesvirus 2 (strain BMV) (BoHV-2) protein is Major DNA-binding protein.